The sequence spans 238 residues: MQTPHILIVEDELVTRNTLKSIFEAEGYDVFEATDGAEMHQILSEYDINLVIMDINLPGKNGLLLARELREQANVALMFLTGRDNEVDKILGLEIGADDYITKPFNPRELTIRARNLLSRTMNLGTVSEERRSVESYKFNGWELDINSRSLIGPDGEQYKLPRSEFRAMLHFCENPGKIQSRAELLKKMTGRELKPHDRTVDVTIRRIRKHFESTPDTPEIIATIHGEGYRFCGDLED.

Residues 5-118 form the Response regulatory domain; sequence HILIVEDELV…ELTIRARNLL (114 aa). Position 54 is a 4-aspartylphosphate (D54). The segment at residues 134–234 is a DNA-binding region (ompR/PhoB-type); it reads VESYKFNGWE…IHGEGYRFCG (101 aa).

Post-translationally, phosphorylated by ArcB.

The protein resides in the cytoplasm. In terms of biological role, member of the two-component regulatory system ArcB/ArcA. Represses a wide variety of aerobic enzymes under anaerobic conditions. It may also be involved in the osmoregulation of envelope proteins. When activated by ArcB, it negatively regulates the expression of genes of aerobic function. Activates the transcription of the plfB operon by binding to its promoter. The sequence is that of Aerobic respiration control protein ArcA (arcA) from Escherichia coli O157:H7.